We begin with the raw amino-acid sequence, 652 residues long: RNA-binding KH domain-containing protein RCF3 (652 aa).

Residues 1 to 14 are compositionally biased toward basic and acidic residues; it reads MERSRSKRNYHYDQ. The disordered stretch occupies residues 1-63; sequence MERSRSKRNY…NGRPSKSHPE (63 aa). Over residues 34–55 the composition is skewed to gly residues; that stretch reads FGGGGGGNNRYRGGGGGGGGNG. 2 KH domains span residues 67–139 and 175–245; these read TTTY…QEAL and RVVT…LAIV. Residues 253-307 form a disordered region; it reads QHRDRSNFQGRSHSPERSFAAAGDDYMPQLRRQSSDRFPRGNFRNNNFSSRQSNY. Residues 292 to 306 are compositionally biased toward low complexity; the sequence is RGNFRNNNFSSRQSN. KH domains are found at residues 324 to 391, 408 to 476, and 576 to 640; these read ELVF…QEAL, LITT…LVEL, and RSTL…QSLL.

As to quaternary structure, homodimer. Interacts with CPL1. Interacts with RS40 and RS41. Interacts with DRB1/HYL1 and SE. Interacts with CPL2. As to expression, expressed in roots, cotyledons, leaves, flowers and siliques.

It localises to the nucleus. It is found in the nucleus speckle. In terms of biological role, acts as a negative regulator of osmotic stress-induced gene expression. Involved in the regulation of thermotolerance responses under heat stress. Functions as an upstream regulator of heat stress transcription factor (HSF) genes. Negatively regulates HSFA1A, HSFA1B and HSFA1D, but positively controls the expression of HSFA1E, HSFA3, HSFA9, HSFB3, and DREB2C. Forms a complex with CPL1 that modulates co-transcriptional processes such as mRNA capping and polyadenylation, and functions to repress stress-inducible gene expression. Regulates pre-mRNA processing under salt stress. Involved in primary miRNA processing and pri-miRNA biogenesis. Binds both intronless and intron-containing pri-miRNAs. Acts as a regulator of biotic stress response gene expression and basal JA-mediated responses involved in defense. Acts as a negative regulator of resistance to the fungal pathogen Fusarium oxysporum. This is RNA-binding KH domain-containing protein RCF3 from Arabidopsis thaliana (Mouse-ear cress).